The primary structure comprises 136 residues: Holo-[acyl-carrier-protein] synthase (136 aa).

The Mg(2+) site is built by Asp-8 and Glu-62.

This sequence belongs to the P-Pant transferase superfamily. AcpS family. Mg(2+) is required as a cofactor.

Its subcellular location is the cytoplasm. It carries out the reaction apo-[ACP] + CoA = holo-[ACP] + adenosine 3',5'-bisphosphate + H(+). Transfers the 4'-phosphopantetheine moiety from coenzyme A to a Ser of acyl-carrier-protein. This is Holo-[acyl-carrier-protein] synthase from Polynucleobacter necessarius subsp. necessarius (strain STIR1).